Consider the following 290-residue polypeptide: Pantothenate synthetase (290 aa).

30–37 contacts ATP; the sequence is MGALHEGH. The active-site Proton donor is His37. Residue Gln61 coordinates (R)-pantoate. Gln61 is a binding site for beta-alanine. 147 to 150 contacts ATP; it reads GEKD. Gln153 is a binding site for (R)-pantoate. Residues Val176 and 184-187 contribute to the ATP site; that span reads KSSR.

It belongs to the pantothenate synthetase family. Homodimer.

It localises to the cytoplasm. It carries out the reaction (R)-pantoate + beta-alanine + ATP = (R)-pantothenate + AMP + diphosphate + H(+). It functions in the pathway cofactor biosynthesis; (R)-pantothenate biosynthesis; (R)-pantothenate from (R)-pantoate and beta-alanine: step 1/1. Functionally, catalyzes the condensation of pantoate with beta-alanine in an ATP-dependent reaction via a pantoyl-adenylate intermediate. This is Pantothenate synthetase from Chlorobium chlorochromatii (strain CaD3).